The chain runs to 192 residues: Protein ORF45 (192 aa).

Plays a role in the expression of ORF41, which itself is required for late gene expression. The chain is Protein ORF45 from Autographa californica nuclear polyhedrosis virus (AcMNPV).